Reading from the N-terminus, the 144-residue chain is Cytochrome c oxidase subunit 4 isoform 1, mitochondrial (144 aa).

The Mitochondrial matrix segment spans residues 1-73; the sequence is SVVKSEDFSL…SFAEMNRGSN (73 aa). Residue Lys4 is modified to N6-acetyllysine; alternate. N6-succinyllysine; alternate is present on Lys4. At Lys28 the chain carries N6-acetyllysine. A phosphoserine mark is found at Ser31 and Ser33. Lys35 carries the post-translational modification N6-acetyllysine; alternate. Residue Lys35 is modified to N6-succinyllysine; alternate. Lys42 is modified (N6-acetyllysine). Residues 74–99 form a helical membrane-spanning segment; it reads EWKTVVGGAMFFIGFTALVIMWQKHY. The Mitochondrial intermembrane portion of the chain corresponds to 100–144; that stretch reads VYGPLPQSFDKEWVAKQTKRMLDMKVNPIQGLASKWDYEKNEWKK.

The protein belongs to the cytochrome c oxidase IV family. In terms of assembly, component of the cytochrome c oxidase (complex IV, CIV), a multisubunit enzyme composed of 14 subunits. The complex is composed of a catalytic core of 3 subunits MT-CO1, MT-CO2 and MT-CO3, encoded in the mitochondrial DNA, and 11 supernumerary subunits COX4I, COX5A, COX5B, COX6A, COX6B, COX6C, COX7A, COX7B, COX7C, COX8 and NDUFA4, which are encoded in the nuclear genome. The complex exists as a monomer or a dimer and forms supercomplexes (SCs) in the inner mitochondrial membrane with NADH-ubiquinone oxidoreductase (complex I, CI) and ubiquinol-cytochrome c oxidoreductase (cytochrome b-c1 complex, complex III, CIII), resulting in different assemblies (supercomplex SCI(1)III(2)IV(1) and megacomplex MCI(2)III(2)IV(2)). Interacts with PHB2; the interaction decreases in absence of SPHK2. Interacts with AFG1L. Interacts with ABCB7; this interaction allows the regulation of cellular iron homeostasis and cellular reactive oxygen species (ROS) levels in cardiomyocytes. Interacts with FLVCR2; this interaction occurs in the absence of heme and is disrupted upon heme binding. Interacts with IRGC.

It is found in the mitochondrion inner membrane. Its pathway is energy metabolism; oxidative phosphorylation. In terms of biological role, component of the cytochrome c oxidase, the last enzyme in the mitochondrial electron transport chain which drives oxidative phosphorylation. The respiratory chain contains 3 multisubunit complexes succinate dehydrogenase (complex II, CII), ubiquinol-cytochrome c oxidoreductase (cytochrome b-c1 complex, complex III, CIII) and cytochrome c oxidase (complex IV, CIV), that cooperate to transfer electrons derived from NADH and succinate to molecular oxygen, creating an electrochemical gradient over the inner membrane that drives transmembrane transport and the ATP synthase. Cytochrome c oxidase is the component of the respiratory chain that catalyzes the reduction of oxygen to water. Electrons originating from reduced cytochrome c in the intermembrane space (IMS) are transferred via the dinuclear copper A center (CU(A)) of subunit 2 and heme A of subunit 1 to the active site in subunit 1, a binuclear center (BNC) formed by heme A3 and copper B (CU(B)). The BNC reduces molecular oxygen to 2 water molecules using 4 electrons from cytochrome c in the IMS and 4 protons from the mitochondrial matrix. The polypeptide is Cytochrome c oxidase subunit 4 isoform 1, mitochondrial (COX4I1) (Pan troglodytes (Chimpanzee)).